A 306-amino-acid polypeptide reads, in one-letter code: Ribonuclease BN (306 aa).

H64, H66, D68, H69, H141, D212, and H270 together coordinate Zn(2+). Residue D68 is the Proton acceptor of the active site.

Belongs to the RNase Z family. RNase BN subfamily. As to quaternary structure, homodimer. Zn(2+) is required as a cofactor.

In terms of biological role, zinc phosphodiesterase, which has both exoribonuclease and endoribonuclease activities. The sequence is that of Ribonuclease BN from Klebsiella pneumoniae subsp. pneumoniae (strain ATCC 700721 / MGH 78578).